Reading from the N-terminus, the 21-residue chain is Glucan endo-1,3-beta-glucosidase 2 (21 aa).

A disordered region spans residues 1 to 21 (APGDLLWSDEFDGAAGSAPNP).

It catalyses the reaction Hydrolysis of (1-&gt;3)-beta-D-glucosidic linkages in (1-&gt;3)-beta-D-glucans.. The polypeptide is Glucan endo-1,3-beta-glucosidase 2 (Papiliotrema laurentii (Cryptococcus laurentii)).